Here is a 65-residue protein sequence, read N- to C-terminus: Stress-associated endoplasmic reticulum protein 2 (65 aa).

Residues 38-58 (GPWLLALFVFVVCGSAIFQII) form a helical membrane-spanning segment.

This sequence belongs to the RAMP4 family. Interacts with SEC61B, SEC61A1 and the SEC61 complex. Interacts with CANX.

Its subcellular location is the membrane. It localises to the endoplasmic reticulum membrane. Interacts with target proteins during their translocation into the lumen of the endoplasmic reticulum. Protects unfolded target proteins against degradation during ER stress. May facilitate glycosylation of target proteins after termination of ER stress. May modulate the use of N-glycosylation sites on target proteins. The chain is Stress-associated endoplasmic reticulum protein 2 (SERP2) from Bos taurus (Bovine).